A 382-amino-acid polypeptide reads, in one-letter code: Flap endonuclease 1 (382 aa).

An N-domain region spans residues 1-104; sequence MGILGLSKLI…GELAKRAERR (104 aa). Residue Asp-34 coordinates Mg(2+). DNA is bound by residues Arg-47 and Arg-70. A Mg(2+)-binding site is contributed by Asp-86. The segment at 95–118 is disordered; the sequence is GELAKRAERREDAQKALEKATEAG. The segment covering 96–115 has biased composition (basic and acidic residues); sequence ELAKRAERREDAQKALEKAT. The tract at residues 122–253 is I-domain; the sequence is DMDKFNRRLV…KRATELMNSY (132 aa). Residues Glu-158, Glu-160, Asp-179, and Asp-181 each contribute to the Mg(2+) site. Residue Glu-158 participates in DNA binding. Positions 231 and 233 each coordinate DNA. Position 233 (Asp-233) interacts with Mg(2+). The segment at 336–344 is interaction with PCNA; that stretch reads TQGRLDSFF. Residues 353–382 form a disordered region; sequence TTPKRKADDKNNVQQKKSKTAGNTKGKRPK. The span at 364-375 shows a compositional bias: polar residues; it reads NVQQKKSKTAGN.

Belongs to the XPG/RAD2 endonuclease family. FEN1 subfamily. In terms of assembly, interacts with PCNA. Three molecules of FEN1 bind to one PCNA trimer with each molecule binding to one PCNA monomer. PCNA stimulates the nuclease activity without altering cleavage specificity. It depends on Mg(2+) as a cofactor. Phosphorylated. Phosphorylation upon DNA damage induces relocalization to the nuclear plasma.

Its subcellular location is the nucleus. The protein resides in the nucleolus. The protein localises to the nucleoplasm. It is found in the mitochondrion. In terms of biological role, structure-specific nuclease with 5'-flap endonuclease and 5'-3' exonuclease activities involved in DNA replication and repair. During DNA replication, cleaves the 5'-overhanging flap structure that is generated by displacement synthesis when DNA polymerase encounters the 5'-end of a downstream Okazaki fragment. It enters the flap from the 5'-end and then tracks to cleave the flap base, leaving a nick for ligation. Also involved in the long patch base excision repair (LP-BER) pathway, by cleaving within the apurinic/apyrimidinic (AP) site-terminated flap. Acts as a genome stabilization factor that prevents flaps from equilibrating into structures that lead to duplications and deletions. Also possesses 5'-3' exonuclease activity on nicked or gapped double-stranded DNA, and exhibits RNase H activity. Also involved in replication and repair of rDNA and in repairing mitochondrial DNA. This chain is Flap endonuclease 1, found in Glossina morsitans morsitans (Savannah tsetse fly).